Reading from the N-terminus, the 72-residue chain is Conotoxin Vc6.16 (72 aa).

The N-terminal stretch at 1-19 (MQKLIILLLVAAVLMSTQA) is a signal peptide. Residues 20–44 (LFQEKRPKEKIDLLSKRKTDAEKQQ) constitute a propeptide that is removed on maturation. Disulfide bonds link cysteine 48-cysteine 62, cysteine 55-cysteine 66, and cysteine 61-cysteine 71.

This sequence belongs to the conotoxin O2 superfamily. As to expression, expressed by the venom duct.

The protein resides in the secreted. Inhibits voltage-gated ion channels. The sequence is that of Conotoxin Vc6.16 from Conus victoriae (Queen Victoria cone).